Here is a 159-residue protein sequence, read N- to C-terminus: MINYLKSFFLYEIVRGMALTLRYFFKAKVTINYPYEKSPVSPRFKGEHALRRYENGVERCIACKLCEAICPAQAIVIEAEALDDGSRRTTRYDIDMTKCIYCGLCQEACPVDAIVEGPNFEFASLTHTALIYDKERLLQNGDKWEQALTSKLYKDYEYR.

4Fe-4S ferredoxin-type domains lie at 51–80 (RRYE…IEAE) and 90–119 (TRYD…EGPN). The [4Fe-4S] cluster site is built by Cys-60, Cys-63, Cys-66, Cys-70, Cys-99, Cys-102, Cys-105, and Cys-109.

Belongs to the complex I 23 kDa subunit family. As to quaternary structure, NDH-1 is composed of 14 different subunits. Subunits NuoA, H, J, K, L, M, N constitute the membrane sector of the complex. The cofactor is [4Fe-4S] cluster.

Its subcellular location is the cell inner membrane. It carries out the reaction a quinone + NADH + 5 H(+)(in) = a quinol + NAD(+) + 4 H(+)(out). Its function is as follows. NDH-1 shuttles electrons from NADH, via FMN and iron-sulfur (Fe-S) centers, to quinones in the respiratory chain. The immediate electron acceptor for the enzyme in this species is believed to be ubiquinone. Couples the redox reaction to proton translocation (for every two electrons transferred, four hydrogen ions are translocated across the cytoplasmic membrane), and thus conserves the redox energy in a proton gradient. This Rickettsia canadensis (strain McKiel) protein is NADH-quinone oxidoreductase subunit I.